We begin with the raw amino-acid sequence, 465 residues long: Lysosomal dipeptide transporter MFSD1 (465 aa).

Residues 1 to 23 (MEEEDEEARALLAGGPDEADRGA) are disordered. The Dileucine internalization motif signature appears at 11–12 (LL). 12 consecutive transmembrane segments (helical) span residues 39 to 59 (LAHRLLVLLLMCFLGFGSYFC), 83 to 103 (LLYAWYSWPNVVLCFFGGFLI), 113 to 133 (TIIFSCFVCIGQVVFALGGIF), 135 to 155 (AFWLMEFGRFVFGIGGESLAV), 170 to 191 (LNLVFGLQLSMARIGSTVNMNL), 213 to 233 (ITLMIGGITCILSLICALALA), 266 to 286 (LWLIFIICVCYYVAVFPFIGL), 303 to 323 (SAINSVVYVISAPMSPVFGLL), 331 to 351 (IIWVLCAVAATLVSHMMLAFT), 361 to 381 (LLGLSYSLLACALWPMVAFVV), 392 to 412 (FMQSIQNLGLAIISIIAGMIL), and 418 to 438 (LFLEVFFIACVSLSLLSVVLL).

It belongs to the major facilitator superfamily. Homodimer. Interacts with lysosomal protein GLMP (via lumenal domain); the interaction starts while both proteins are still in the endoplasmic reticulum and is required for stabilization of MFSD1 in lysosomes but has no direct effect on its targeting to lysosomes or transporter activity.

The protein resides in the lysosome membrane. It catalyses the reaction L-alpha-aminoacyl-L-arginine(out) = L-alpha-aminoacyl-L-arginine(in). The enzyme catalyses L-arginyl-L-alpha-amino acid(out) = L-arginyl-L-alpha-amino acid(in). It carries out the reaction L-arginyl-glycine(out) = L-arginyl-glycine(in). The catalysed reaction is L-alpha-aminoacyl-L-lysine(out) = L-alpha-aminoacyl-L-lysine(in). It catalyses the reaction L-aspartyl-L-lysine(out) = L-aspartyl-L-lysine(in). The enzyme catalyses L-alanyl-L-lysine(out) = L-alanyl-L-lysine(in). It carries out the reaction L-lysyl-L-alpha-amino acid(out) = L-lysyl-L-alpha-amino acid(in). The catalysed reaction is L-lysyl-L-alanine(out) = L-lysyl-L-alanine(in). It catalyses the reaction L-lysyl-L-lysine(out) = L-lysyl-L-lysine(in). The enzyme catalyses L-lysyl-glycine(out) = L-lysyl-glycine(in). It carries out the reaction L-alpha-aminoacyl-L-histidine(out) = L-alpha-aminoacyl-L-histidine(in). The catalysed reaction is L-histidyl-L-alpha-amino acid(out) = L-histidyl-L-alpha-amino acid(in). It catalyses the reaction L-histidyl-glycine(out) = L-histidyl-glycine(in). Its function is as follows. Lysosomal dipeptide uniporter that selectively exports lysine, arginine or histidine-containing dipeptides with a net positive charge from the lysosome lumen into the cytosol. Could play a role in a specific type of protein O-glycosylation indirectly regulating macrophages migration and tissue invasion. Also essential for liver homeostasis. The polypeptide is Lysosomal dipeptide transporter MFSD1 (Homo sapiens (Human)).